A 98-amino-acid polypeptide reads, in one-letter code: U-scoloptoxin(16)-Er9a (98 aa).

The N-terminal stretch at 1–24 (MVSYLCMSVSSGWLSIGKIAIKDG) is a signal peptide.

It belongs to the scoloptoxin-16 family. In terms of processing, contains 4 disulfide bonds. As to expression, expressed by the venom gland.

The protein resides in the secreted. This Ethmostigmus rubripes (Giant centipede) protein is U-scoloptoxin(16)-Er9a.